The chain runs to 137 residues: Large ribosomal subunit protein uL16 (137 aa).

The tract at residues 1–22 is disordered; it reads MLQPKRTKFRKQQKGRNRGLAH.

This sequence belongs to the universal ribosomal protein uL16 family. In terms of assembly, part of the 50S ribosomal subunit.

Functionally, binds 23S rRNA and is also seen to make contacts with the A and possibly P site tRNAs. The protein is Large ribosomal subunit protein uL16 of Saccharophagus degradans (strain 2-40 / ATCC 43961 / DSM 17024).